Consider the following 288-residue polypeptide: Transposase for insertion sequence element IS1106 (288 aa).

This sequence belongs to the transposase 11 family.

Functionally, involved in the transposition of the insertion sequence. This is Transposase for insertion sequence element IS1106 from Neisseria meningitidis serogroup B.